The sequence spans 219 residues: Agamous-like MADS-box protein AGL19 (219 aa).

The MADS-box domain maps to 1 to 61 (MVRGKTEMKR…SKLYEFSSSS (61 aa)). Positions 77–96 (GNNHKRNDNSQQARDETSGL) are disordered. One can recognise a K-box domain in the interval 86–176 (SQQARDETSG…KEKWLGMGTA (91 aa)).

In terms of assembly, interacts with SOC1 and AGL21. As to expression, mostly expressed in the outer layers of the root meristem (lateral root cap and epidermis) and in the central cylinder cells of mature roots. Also present in rosette leaves and seedlings and, to a lesser extent, in cauline leaves and flowers. Enriched in apices including the shoot apical meristem and developing leaf primordia.

It is found in the nucleus. Its function is as follows. Probable transcription factor that promotes flowering, especially in response to vernalization by short periods of cold, in an FLC-inpedendent manner. The protein is Agamous-like MADS-box protein AGL19 (AGL19) of Arabidopsis thaliana (Mouse-ear cress).